Consider the following 334-residue polypeptide: Holliday junction branch migration complex subunit RuvB (334 aa).

The large ATPase domain (RuvB-L) stretch occupies residues 1 to 182; sequence MNERMVDQSM…FGVHLRLEYY (182 aa). Residues Leu21, Arg22, Gly63, Lys66, Thr67, Thr68, 129–131, Arg172, Tyr182, and Arg219 contribute to the ATP site; that span reads EDF. Residue Thr67 coordinates Mg(2+). Positions 183–253 are small ATPAse domain (RuvB-S); the sequence is NESDLKEIII…TTKHALGLLQ (71 aa). Positions 256 to 334 are head domain (RuvB-H); sequence QHGLDYIDHK…HFAKSNEERG (79 aa). Positions 292, 311, and 316 each coordinate DNA.

This sequence belongs to the RuvB family. Homohexamer. Forms an RuvA(8)-RuvB(12)-Holliday junction (HJ) complex. HJ DNA is sandwiched between 2 RuvA tetramers; dsDNA enters through RuvA and exits via RuvB. An RuvB hexamer assembles on each DNA strand where it exits the tetramer. Each RuvB hexamer is contacted by two RuvA subunits (via domain III) on 2 adjacent RuvB subunits; this complex drives branch migration. In the full resolvosome a probable DNA-RuvA(4)-RuvB(12)-RuvC(2) complex forms which resolves the HJ.

Its subcellular location is the cytoplasm. It carries out the reaction ATP + H2O = ADP + phosphate + H(+). The RuvA-RuvB-RuvC complex processes Holliday junction (HJ) DNA during genetic recombination and DNA repair, while the RuvA-RuvB complex plays an important role in the rescue of blocked DNA replication forks via replication fork reversal (RFR). RuvA specifically binds to HJ cruciform DNA, conferring on it an open structure. The RuvB hexamer acts as an ATP-dependent pump, pulling dsDNA into and through the RuvAB complex. RuvB forms 2 homohexamers on either side of HJ DNA bound by 1 or 2 RuvA tetramers; 4 subunits per hexamer contact DNA at a time. Coordinated motions by a converter formed by DNA-disengaged RuvB subunits stimulates ATP hydrolysis and nucleotide exchange. Immobilization of the converter enables RuvB to convert the ATP-contained energy into a lever motion, pulling 2 nucleotides of DNA out of the RuvA tetramer per ATP hydrolyzed, thus driving DNA branch migration. The RuvB motors rotate together with the DNA substrate, which together with the progressing nucleotide cycle form the mechanistic basis for DNA recombination by continuous HJ branch migration. Branch migration allows RuvC to scan DNA until it finds its consensus sequence, where it cleaves and resolves cruciform DNA. In Staphylococcus aureus (strain N315), this protein is Holliday junction branch migration complex subunit RuvB.